Here is a 360-residue protein sequence, read N- to C-terminus: 3-isopropylmalate dehydrogenase (360 aa).

Residue 76–89 (GPKWDTIERDIRPE) coordinates NAD(+). The substrate site is built by Arg96, Arg106, Arg134, and Asp224. Mg(2+) contacts are provided by Asp224, Asp248, and Asp252. Position 282-294 (282-294 (GSAPDIAGKGIAN)) interacts with NAD(+).

It belongs to the isocitrate and isopropylmalate dehydrogenases family. LeuB type 1 subfamily. Homodimer. Requires Mg(2+) as cofactor. The cofactor is Mn(2+).

The protein localises to the cytoplasm. The enzyme catalyses (2R,3S)-3-isopropylmalate + NAD(+) = 4-methyl-2-oxopentanoate + CO2 + NADH. It functions in the pathway amino-acid biosynthesis; L-leucine biosynthesis; L-leucine from 3-methyl-2-oxobutanoate: step 3/4. Its function is as follows. Catalyzes the oxidation of 3-carboxy-2-hydroxy-4-methylpentanoate (3-isopropylmalate) to 3-carboxy-4-methyl-2-oxopentanoate. The product decarboxylates to 4-methyl-2 oxopentanoate. In Pseudomonas savastanoi pv. phaseolicola (strain 1448A / Race 6) (Pseudomonas syringae pv. phaseolicola (strain 1448A / Race 6)), this protein is 3-isopropylmalate dehydrogenase.